The sequence spans 834 residues: Sodium/hydrogen exchanger 3 (834 aa).

A signal peptide spans 1 to 25; the sequence is MWGLGARGPDRGLLLALALGGLARA. At 26 to 51 the chain is on the extracellular side; it reads GGVEVEPGGAHGESGGFQVVTFEWAH. A helical membrane pass occupies residues 52–74; the sequence is VQDPYVIALWILVASLAKIGFHL. Topologically, residues 75–82 are cytoplasmic; sequence SHKVTSVV. The chain crosses the membrane as a helical span at residues 83–102; that stretch reads PESALLIVLGLVLGGIVWAA. Residues 103 to 111 lie on the Extracellular side of the membrane; it reads DHIASFTLT. A helical transmembrane segment spans residues 112–129; that stretch reads PTVFFFYLLPPIVLDAGY. Residues 130–132 lie on the Cytoplasmic side of the membrane; sequence FMP. Residues 133–168 traverse the membrane as a helical segment; that stretch reads NRLFFGNLGTILLYAVVGTVWNAATTGLSLYGVFLS. The a 1,2-diacyl-sn-glycero-3-phospho-(1D-myo-inositol) site is built by glycine 138, glycine 141, and threonine 142. Residues 169 to 181 are Extracellular-facing; the sequence is GLMGDLQIGLLDF. Residues 182–203 form a helical membrane-spanning segment; that stretch reads LLFGSLMAAVDPVAVLAVFEEV. Residues 204–205 lie on the Cytoplasmic side of the membrane; the sequence is HV. Residues 206–237 traverse the membrane as a helical segment; sequence NEVLFIIVFGESLLNDAVTVVLYNVFESFVAL. Topologically, residues 238–244 are extracellular; the sequence is GGDNVTG. Asparagine 241 carries N-linked (GlcNAc...) asparagine glycosylation. The helical transmembrane segment at 245 to 279 threads the bilayer; sequence VDCVKGIVSFFVVSLGGTLVGVVFAFLLSLVTRFT. At 280–281 the chain is on the cytoplasmic side; sequence KH. A helical membrane pass occupies residues 282–304; the sequence is VRIIEPGFVFIISYLSYLTSEML. Over 305–306 the chain is Extracellular; sequence SL. Residues 307–323 traverse the membrane as a helical segment; sequence SAILAITFCGICCQKYV. Over 324–330 the chain is Cytoplasmic; sequence KANISEQ. The chain crosses the membrane as a helical span at residues 331–359; sequence SATTVRYTMKMLASSAETIIFMFLGISAV. Residues 360 to 367 are Extracellular-facing; the sequence is NPFIWTWN. Residues 368–389 traverse the membrane as a helical segment; it reads TAFVLLTLVFISVYRAIGVVLQ. Residues 390–402 are Cytoplasmic-facing; it reads TWLLNRYRMVQLE. Methionine 398 contacts a 1,2-diacyl-sn-glycero-3-phospho-(1D-myo-inositol). A helical membrane pass occupies residues 403-426; the sequence is PIDQVVLSYGGLRGAVAFALVVLL. The Extracellular segment spans residues 427-433; it reads DGDKVKE. Residues 434–467 traverse the membrane as a helical segment; it reads KNLFVSTTIIVVFFTVIFQGLTIKPLVQWLKVKR. Topologically, residues 468–834 are cytoplasmic; that stretch reads SEHREPRLNE…PAALPESTHM (367 aa). Residues glutamine 497, isoleucine 498, and histidine 500 each coordinate a 1,2-diacyl-sn-glycero-3-phospho-(1D-myo-inositol). Phosphoserine occurs at positions 555 and 563. Residues 575-589 are interaction with EZR; the sequence is RSSTVEASVSYLLRE. The interval 590 to 667 is interaction with NHERF4; that stretch reads NVSAVCLDMQ…RKRLESFKST (78 aa). The tract at residues 591 to 695 is interaction with AHCYL1; that stretch reads VSAVCLDMQS…AQKRRNSSIP (105 aa). 2 positions are modified to phosphoserine: serine 592 and serine 607. A Phosphoserine; by SGK1 modification is found at serine 663. Residues 679–691 are compositionally biased toward basic residues; sequence KLYKRERAQKRRN. The interval 679–728 is disordered; it reads KLYKRERAQKRRNSSIPNGKLPMESPAQNFTIKEKDLELSDTEEPPNYDE. Residues 717–728 show a composition bias toward acidic residues; sequence LSDTEEPPNYDE. 3 positions are modified to phosphoserine: serine 718, serine 810, and serine 813. The interval 814-834 is disordered; that stretch reads FLQADGPEERPPAALPESTHM.

The protein belongs to the monovalent cation:proton antiporter 1 (CPA1) transporter (TC 2.A.36) family. In terms of assembly, homodimer. Found in the forms of complex and dynamic macromolecular complexes. Binds NHERF1 and NHERF2. Interacts with CHP1; increases SLC9A3 trafficking and activity at the plasma membrane. Interacts with CHP2 and SHANK2. Interacts with PDZK1 (via C-terminal PDZ domain). Interacts with NHERF4 and interaction decrease in response to elevated calcium ion levels. Interacts with AHCYL1; the interaction is required for SLC9A3 activity. Interacts with SNX27 (via PDZ domains); directs SLC9A3 membrane insertion from early endosomes to the plasma membrane. Interacts with EZR; interaction targets SLC9A3 to the apical membrane. Post-translationally, phosphorylated by PKA, which inhibits activity. Phosphorylation at Ser-663 by SGK1 is associated with increased abundance at the cell membrane. Phosphorylation at Ser-718 by CSNK2A1 regulates SLC9A3 activity through the formation of multiple signaling complexes.

The protein resides in the apical cell membrane. It is found in the cell membrane. Its subcellular location is the recycling endosome membrane. It localises to the early endosome membrane. It catalyses the reaction Na(+)(in) + H(+)(out) = Na(+)(out) + H(+)(in). Its activity is regulated as follows. Seems to switch between active and inactive modes in response to various stimuli. Activated directly or indirectly by membrane phosphatidylinositol (PIs). Regulated by a variety of auxiliary proteins, which facilitate the maturation, cell surface expression and function of the transporter. Inhibited specifically by the drug tenapanor. Plasma membrane Na(+)/H(+) antiporter. Exchanges intracellular H(+) ions for extracellular Na(+) in 1:1 stoichiometry, playing a key role in salt and fluid absorption and pH homeostasis. Major apical Na(+)/H(+) exchanger in kidney and intestine playing an important role in renal and intestine Na(+) absorption and blood pressure regulation. The protein is Sodium/hydrogen exchanger 3 of Homo sapiens (Human).